The sequence spans 389 residues: 26S proteasome regulatory subunit 10B (389 aa).

Position 72 is an N6-acetyllysine (lysine 72). 174–181 is an ATP binding site; that stretch reads GPPGTGKT. Lysine 206 is subject to N6-acetyllysine. Serine 244 carries the post-translational modification Phosphoserine.

This sequence belongs to the AAA ATPase family. In terms of assembly, component of the 19S proteasome regulatory particle complex. The 26S proteasome consists of a 20S core particle (CP) and two 19S regulatory subunits (RP). The regulatory particle is made of a lid composed of 9 subunits, a base containing 6 ATPases including PSMC6 and few additional components. Interacts with PAAF1.

It localises to the cytoplasm. It is found in the nucleus. Component of the 26S proteasome, a multiprotein complex involved in the ATP-dependent degradation of ubiquitinated proteins. This complex plays a key role in the maintenance of protein homeostasis by removing misfolded or damaged proteins, which could impair cellular functions, and by removing proteins whose functions are no longer required. Therefore, the proteasome participates in numerous cellular processes, including cell cycle progression, apoptosis, or DNA damage repair. PSMC6 belongs to the heterohexameric ring of AAA (ATPases associated with diverse cellular activities) proteins that unfolds ubiquitinated target proteins that are concurrently translocated into a proteolytic chamber and degraded into peptides. This chain is 26S proteasome regulatory subunit 10B (PSMC6), found in Bos taurus (Bovine).